Reading from the N-terminus, the 454-residue chain is Aquaglyceroporin-9 (454 aa).

The Cytoplasmic segment spans residues 1–186 (MEGGLRSPLN…RHTMREPFSE (186 aa)). The chain crosses the membrane as a helical span at residues 187-207 (FFGVFILILFGDGVVAQVVLS). At 208-216 (SGERGSYQS) the chain is on the extracellular side. A helical membrane pass occupies residues 217 to 237 (ISWGWGIGVMLGVYASGVSGA). At 238–257 (HINPAVTFANCIFRKFPWRK) the chain is on the cytoplasmic side. The NPA 1 motif lies at 240-242 (NPA). A helical transmembrane segment spans residues 258–278 (FPIYMLAQVLGAMCASGVVYA). Over 279–316 (NYKSAIDMFEGGNNIRTVGLNTSSAGIFCTYPAPFMTK) the chain is Extracellular. An N-linked (GlcNAc...) asparagine glycan is attached at asparagine 299. Residues 317-337 (TGQFFSEFVASTILMFCIYAL) traverse the membrane as a helical segment. At 338–351 (QDNGNLGSGNLTPL) the chain is on the cytoplasmic side. Residues 352–372 (GLFFVIFGIGACFGWETGYAI) traverse the membrane as a helical segment. The NPA 2 motif lies at 373-375 (NLA). Residues 373-403 (NLARDFGPRLMSYFLGYGHEVWSAGNYYFWV) are Extracellular-facing. A helical membrane pass occupies residues 404 to 424 (PMVAPFIGCLFGGWLYDVFIF). Over 425-454 (TGESPINTPWMGLKRLMPGGLGSKKVDSKV) the chain is Cytoplasmic.

The protein belongs to the MIP/aquaporin (TC 1.A.8) family.

It localises to the membrane. The catalysed reaction is H2O(in) = H2O(out). It catalyses the reaction glycerol(in) = glycerol(out). Water channel required to facilitate the transport of water across membranes. May play a role in the vegetative growth and pathogenicity. The chain is Aquaglyceroporin-9 from Botryotinia fuckeliana (strain B05.10) (Noble rot fungus).